A 399-amino-acid polypeptide reads, in one-letter code: Elongation factor Tu (399 aa).

Residues 10-204 (KPHVNIGTIG…AVDSSIPEPE (195 aa)) form the tr-type G domain. The tract at residues 19 to 26 (GHVDHGKT) is G1. 19–26 (GHVDHGKT) is a GTP binding site. T26 provides a ligand contact to Mg(2+). The segment at 60-64 (GITIN) is G2. The segment at 81–84 (DCPG) is G3. GTP-binding positions include 81 to 85 (DCPGH) and 136 to 139 (NKCD). The segment at 136–139 (NKCD) is G4. Residues 174–176 (SGL) form a G5 region.

It belongs to the TRAFAC class translation factor GTPase superfamily. Classic translation factor GTPase family. EF-Tu/EF-1A subfamily. As to quaternary structure, monomer.

The protein localises to the cytoplasm. It carries out the reaction GTP + H2O = GDP + phosphate + H(+). In terms of biological role, GTP hydrolase that promotes the GTP-dependent binding of aminoacyl-tRNA to the A-site of ribosomes during protein biosynthesis. In Synechococcus sp. (strain CC9605), this protein is Elongation factor Tu.